The chain runs to 215 residues: UPF0502 protein YceH (215 aa).

Belongs to the UPF0502 family.

This chain is UPF0502 protein YceH, found in Salmonella arizonae (strain ATCC BAA-731 / CDC346-86 / RSK2980).